Reading from the N-terminus, the 328-residue chain is Phenylalanine--tRNA ligase alpha subunit (328 aa).

Position 245 (Glu245) interacts with Mg(2+).

Belongs to the class-II aminoacyl-tRNA synthetase family. Phe-tRNA synthetase alpha subunit type 1 subfamily. Tetramer of two alpha and two beta subunits. Mg(2+) is required as a cofactor.

The protein resides in the cytoplasm. It carries out the reaction tRNA(Phe) + L-phenylalanine + ATP = L-phenylalanyl-tRNA(Phe) + AMP + diphosphate + H(+). In Helicobacter pylori (strain ATCC 700392 / 26695) (Campylobacter pylori), this protein is Phenylalanine--tRNA ligase alpha subunit (pheS).